Reading from the N-terminus, the 493-residue chain is Non-cyanogenic beta-glucosidase (493 aa).

An N-terminal signal peptide occupies residues 1–18 (MDFIVAIFALFVISSFTI). N-linked (GlcNAc...) asparagine glycosylation occurs at Asn34. Residues Gln54, His158, and 203-204 (NE) contribute to the a beta-D-glucoside site. Glu204 acts as the Proton donor in catalysis. N-linked (GlcNAc...) asparagine glycosylation occurs at Asn335. A beta-D-glucoside is bound at residue Tyr346. Asn371 and Asn412 each carry an N-linked (GlcNAc...) asparagine glycan. A beta-D-glucoside-binding positions include Glu422, Trp471, 478-479 (EW), and Phe487. Catalysis depends on Glu422, which acts as the Nucleophile.

Belongs to the glycosyl hydrolase 1 family. As to expression, leaves.

The catalysed reaction is Hydrolysis of terminal, non-reducing beta-D-glucosyl residues with release of beta-D-glucose.. The chain is Non-cyanogenic beta-glucosidase from Trifolium repens (Creeping white clover).